The primary structure comprises 201 residues: Holliday junction branch migration complex subunit RuvA (201 aa).

Positions Met1–Gly64 are domain I. The interval Thr65–Ser143 is domain II. Residues Phe144–Ala153 form a flexible linker region. A domain III region spans residues Ala153–Arg201.

The protein belongs to the RuvA family. In terms of assembly, homotetramer. Forms an RuvA(8)-RuvB(12)-Holliday junction (HJ) complex. HJ DNA is sandwiched between 2 RuvA tetramers; dsDNA enters through RuvA and exits via RuvB. An RuvB hexamer assembles on each DNA strand where it exits the tetramer. Each RuvB hexamer is contacted by two RuvA subunits (via domain III) on 2 adjacent RuvB subunits; this complex drives branch migration. In the full resolvosome a probable DNA-RuvA(4)-RuvB(12)-RuvC(2) complex forms which resolves the HJ.

The protein resides in the cytoplasm. In terms of biological role, the RuvA-RuvB-RuvC complex processes Holliday junction (HJ) DNA during genetic recombination and DNA repair, while the RuvA-RuvB complex plays an important role in the rescue of blocked DNA replication forks via replication fork reversal (RFR). RuvA specifically binds to HJ cruciform DNA, conferring on it an open structure. The RuvB hexamer acts as an ATP-dependent pump, pulling dsDNA into and through the RuvAB complex. HJ branch migration allows RuvC to scan DNA until it finds its consensus sequence, where it cleaves and resolves the cruciform DNA. This Methylococcus capsulatus (strain ATCC 33009 / NCIMB 11132 / Bath) protein is Holliday junction branch migration complex subunit RuvA.